The chain runs to 872 residues: Leucine--tRNA ligase (872 aa).

Residues 42–52 (PYPSGKLHMGH) carry the 'HIGH' region motif. The 'KMSKS' region signature appears at 632 to 636 (KMSKS). An ATP-binding site is contributed by K635.

This sequence belongs to the class-I aminoacyl-tRNA synthetase family.

Its subcellular location is the cytoplasm. It catalyses the reaction tRNA(Leu) + L-leucine + ATP = L-leucyl-tRNA(Leu) + AMP + diphosphate. In Chromobacterium violaceum (strain ATCC 12472 / DSM 30191 / JCM 1249 / CCUG 213 / NBRC 12614 / NCIMB 9131 / NCTC 9757 / MK), this protein is Leucine--tRNA ligase.